A 143-amino-acid polypeptide reads, in one-letter code: MELNSIKPAEGAKHAKRRVGRGIGSGLGKTAGRGHKGQKSRSGGYHKVGFEGGQMPLQRRLPKRGFKSHLLKFNAEVTLSTLEQLGLAEVDLAALKSAGVVGQLAKVVKVIKSGELTKAVKLNGIGATAGAKAAIEAAGGSLA.

The segment at 1–54 (MELNSIKPAEGAKHAKRRVGRGIGSGLGKTAGRGHKGQKSRSGGYHKVGFEGGQ) is disordered. The span at 21–31 (RGIGSGLGKTA) shows a compositional bias: gly residues.

It belongs to the universal ribosomal protein uL15 family. As to quaternary structure, part of the 50S ribosomal subunit.

Its function is as follows. Binds to the 23S rRNA. This chain is Large ribosomal subunit protein uL15, found in Paracidovorax citrulli (strain AAC00-1) (Acidovorax citrulli).